A 507-amino-acid chain; its full sequence is Nuclear poly(A) polymerase 3 (507 aa).

ATP contacts are provided by residues 79-81, 91-94, Asp147, Lys208, Tyr217, and 226-227; these read YGS, SDID, and GV. Residues Asp92, Asp94, and Asp147 each contribute to the Mg(2+) site.

It belongs to the poly(A) polymerase family. In terms of assembly, monomer. Forms a complex with cleavage and polyadenylation specificity factor (CPSF) subunits FIPS5 and CPSF30. Mg(2+) serves as cofactor. The cofactor is Mn(2+). As to expression, expressed in leaves (mostly in petioles and tips), cotyledon, roots (tips, vascular tissue of the radicle, and throughout the root tissue excluding the elongation zone), stems, and flowers (restricted to the stigma and the pollen in mature anthers). Active in the primary and secondary root systems.

It localises to the nucleus. The catalysed reaction is RNA(n) + ATP = RNA(n)-3'-adenine ribonucleotide + diphosphate. Essential protein. Polymerase that creates the 3'-poly(A) tail of mRNA's. Also required for the endoribonucleolytic cleavage reaction at some polyadenylation sites. May acquire specificity through interaction with a cleavage and polyadenylation specificity factor (CPSF) at its C-terminus. The polypeptide is Nuclear poly(A) polymerase 3 (Arabidopsis thaliana (Mouse-ear cress)).